We begin with the raw amino-acid sequence, 435 residues long: MPALCATYLIHSGNLRACLRIVPLTKPSVVIAYRHLSKSSSKIAPAAALNTAPIEFTPNTSAASLHERSTVIKDAARSALRCNDTTPTPALPFDVKRVDKANRAAGRKLPAASGVLSAYALMGPYIQLAKPRLTVLVMLSAICSYALSPYPATVLELLSLTVGTTLCSAAANGINMGREPDFDRQMMRTQARPVVRGLVTPMQAYKFSAVSGVIGTAILYAGVNPTVALLGASNIVLYSWFYTSLKRKHIINTWFGAITGAIPPLMGWAAASPLTHPGCWCLAGLLYAWQFPHFNTLSHNIRNEYKNAGHVMTAWKNPKLNARVALRYSLLMFPLCFGLSYYGITDWTYQIDSALVNGWMSFWAFKFWWQQRYNYSKKVYNNKAEFNKGMVLANVYARKTFWVSVLHLPAVLILAIVHKKGRWDWLFSDEGKLVA.

The N-terminal 35 residues, 1 to 35, are a transit peptide targeting the mitochondrion; the sequence is MPALCATYLIHSGNLRACLRIVPLTKPSVVIAYRH. Transmembrane regions (helical) follow at residues 135–155, 157–177, 212–232, 250–270, 324–344, and 401–421; these read VLVMLSAICSYALSPYPATVL, LLSLTVGTTLCSAAANGINMG, GVIGTAILYAGVNPTVALLGA, IINTWFGAITGAIPPLMGWAA, VALRYSLLMFPLCFGLSYYGI, and FWVSVLHLPAVLILAIVHKKG.

The protein belongs to the UbiA prenyltransferase family.

The protein resides in the mitochondrion membrane. Converts protoheme IX and farnesyl diphosphate to heme O. This chain is Protoheme IX farnesyltransferase, mitochondrial (COX10), found in Eremothecium gossypii (strain ATCC 10895 / CBS 109.51 / FGSC 9923 / NRRL Y-1056) (Yeast).